A 318-amino-acid polypeptide reads, in one-letter code: Ferrochelatase (318 aa).

Fe cation-binding residues include His186 and Glu264.

This sequence belongs to the ferrochelatase family.

The protein resides in the cytoplasm. It carries out the reaction heme b + 2 H(+) = protoporphyrin IX + Fe(2+). The protein operates within porphyrin-containing compound metabolism; protoheme biosynthesis; protoheme from protoporphyrin-IX: step 1/1. Catalyzes the ferrous insertion into protoporphyrin IX. This chain is Ferrochelatase, found in Chlamydia abortus (strain DSM 27085 / S26/3) (Chlamydophila abortus).